The primary structure comprises 146 residues: Large ribosomal subunit protein uL15 (146 aa).

The disordered stretch occupies residues 1–51 (MKLHELQPAPGSRKERNRVGRGIGSGNGKTSGKGHKGQNARSGGGVRIGFE). Composition is skewed to gly residues over residues 21–31 (RGIGSGNGKTS) and 42–51 (SGGGVRIGFE).

The protein belongs to the universal ribosomal protein uL15 family. Part of the 50S ribosomal subunit.

Its function is as follows. Binds to the 23S rRNA. The chain is Large ribosomal subunit protein uL15 from Anoxybacillus flavithermus (strain DSM 21510 / WK1).